A 546-amino-acid polypeptide reads, in one-letter code: Protein phosphatase 1G (546 aa).

G2 carries N-myristoyl glycine lipidation. R22 is modified (omega-N-methylarginine). In terms of domain architecture, PPM-type phosphatase spans 26-505 (PYGFSAMQGW…DNMTCIIICF (480 aa)). Mn(2+) contacts are provided by D60 and G61. 2 disordered regions span residues 116-139 (QIAG…DVDN) and 161-328 (GQNC…SDSG). Position 122 is a phosphothreonine (T122). Residues 123 to 139 (EDEDEKEKVADEDDVDN) are compositionally biased toward acidic residues. The residue at position 183 (S183) is a Phosphoserine. Positions 259–312 (DSEDESDEAEEEEEDSEECSEEEDGYSSEEAENEEDEDDTEEAEEDDEEEEEEM) are enriched in acidic residues. Residue K383 is modified to N6-acetyllysine. Mn(2+)-binding residues include D441 and D496. The tract at residues 512–546 (ELQPESGKRKLEEVLSTEGAEENGNSDKKKKAKRD) is disordered. S527 carries the post-translational modification Phosphoserine.

This sequence belongs to the PP2C family. In terms of assembly, interacts with NOL3; may dephosphorylate NOL3. Mg(2+) is required as a cofactor. Requires Mn(2+) as cofactor. In terms of tissue distribution, widely expressed. Most abundant in testis, skeletal muscle, and heart.

The protein resides in the cytoplasm. It localises to the membrane. The enzyme catalyses O-phospho-L-seryl-[protein] + H2O = L-seryl-[protein] + phosphate. It carries out the reaction O-phospho-L-threonyl-[protein] + H2O = L-threonyl-[protein] + phosphate. This is Protein phosphatase 1G (PPM1G) from Homo sapiens (Human).